Consider the following 551-residue polypeptide: E-selectin (551 aa).

An N-terminal signal peptide occupies residues Met-1 to Thr-23. Residues Trp-24–Tyr-141 enclose the C-type lectin domain. At Trp-24–Pro-495 the chain is on the extracellular side. Asn-32 and Asn-45 each carry an N-linked (GlcNAc...) asparagine glycan. 17 disulfide bridges follow: Cys-42–Cys-140, Cys-113–Cys-132, Cys-145–Cys-156, Cys-150–Cys-165, Cys-167–Cys-176, Cys-182–Cys-226, Cys-195–Cys-208, Cys-212–Cys-239, Cys-244–Cys-288, Cys-257–Cys-270, Cys-274–Cys-301, Cys-306–Cys-351, Cys-337–Cys-364, Cys-369–Cys-414, Cys-400–Cys-427, Cys-432–Cys-473, and Cys-459–Cys-486. Residues Glu-103, Asn-105, and Glu-111 each contribute to the Ca(2+) site. A carbohydrate is bound by residues Glu-103–Glu-111, Glu-115–Arg-120, and Asn-128–Glu-130. Ca(2+)-binding residues include Asn-128 and Asp-129. In terms of domain architecture, EGF-like spans Thr-142–Glu-177. The N-linked (GlcNAc...) asparagine glycan is linked to Asn-162. 5 Sushi domains span residues Val-180–Val-241, Val-242–Ala-303, Ser-305–Ala-366, Lys-368–Val-429, and Val-430–Glu-488. Asn-194, Asn-201, and Asn-205 each carry an N-linked (GlcNAc...) asparagine glycan. A glycan (N-linked (GlcNAc...) asparagine) is linked at Asn-267. N-linked (GlcNAc...) asparagine glycans are attached at residues Asn-314, Asn-321, and Asn-334. N-linked (GlcNAc...) asparagine glycosylation is found at Asn-442 and Asn-466. Residues Leu-496–Phe-517 form a helical membrane-spanning segment. Residues Leu-518 to Ile-551 lie on the Cytoplasmic side of the membrane.

It belongs to the selectin/LECAM family. In terms of assembly, interacts with SELPLG/PSGL1 and PODXL2 through the sialyl Lewis X epitope. SELPLG sulfation appears not to be required for this interaction.

Its subcellular location is the cell membrane. Cell-surface glycoprotein having a role in immunoadhesion. Mediates in the adhesion of blood neutrophils in cytokine-activated endothelium through interaction with SELPLG/PSGL1. May have a role in capillary morphogenesis. The chain is E-selectin (SELE) from Oryctolagus cuniculus (Rabbit).